Consider the following 57-residue polypeptide: uncharacterized protein (57 aa).

This is an uncharacterized protein from His1 virus (isolate Australia/Victoria) (His1V).